The following is a 326-amino-acid chain: Malate dehydrogenase (326 aa).

NAD(+) is bound at residue 12 to 18; that stretch reads GGTGQIA. Substrate is bound by residues arginine 93 and arginine 99. Residues asparagine 106, glutamine 113, and 130–132 each bind NAD(+); that span reads VGN. Residues asparagine 132 and arginine 163 each contribute to the substrate site. Histidine 188 serves as the catalytic Proton acceptor.

It belongs to the LDH/MDH superfamily. MDH type 2 family.

It catalyses the reaction (S)-malate + NAD(+) = oxaloacetate + NADH + H(+). Catalyzes the reversible oxidation of malate to oxaloacetate. In Chlamydia trachomatis serovar A (strain ATCC VR-571B / DSM 19440 / HAR-13), this protein is Malate dehydrogenase.